The following is a 241-amino-acid chain: Probable transcriptional regulatory protein Neut_0281 (241 aa).

It belongs to the TACO1 family.

The protein localises to the cytoplasm. The sequence is that of Probable transcriptional regulatory protein Neut_0281 from Nitrosomonas eutropha (strain DSM 101675 / C91 / Nm57).